Consider the following 412-residue polypeptide: Argininosuccinate synthase (412 aa).

Residues Ala12–Ser20 and Ala39 contribute to the ATP site. L-citrulline contacts are provided by Tyr91 and Ser96. Gly121 provides a ligand contact to ATP. Thr123, Asn127, and Asp128 together coordinate L-aspartate. Asn127 contacts L-citrulline. L-citrulline-binding residues include Arg131, Ser180, Ser189, Glu265, and Tyr277.

Belongs to the argininosuccinate synthase family. Type 1 subfamily. In terms of assembly, homotetramer.

The protein localises to the cytoplasm. The enzyme catalyses L-citrulline + L-aspartate + ATP = 2-(N(omega)-L-arginino)succinate + AMP + diphosphate + H(+). It participates in amino-acid biosynthesis; L-arginine biosynthesis; L-arginine from L-ornithine and carbamoyl phosphate: step 2/3. This Pseudoalteromonas atlantica (strain T6c / ATCC BAA-1087) protein is Argininosuccinate synthase.